A 290-amino-acid polypeptide reads, in one-letter code: MSQHDPVSAAWRAHRAYLVDLAFRMVGDIGVAEDMVQEAFSRLLRAPVGDIDDERGWLIVVTSRLCLDHIKSASTRRERPQDIAAWHDGDASVSSVDPADRVTLDDEVRLALLIMLERLGPAERVVFVLHEIFGLPYQQIATTIGSQASTCRQLAHRARRKINESRIAASVEPAQHRVVTRAFIEACSNGDLDTLLEVLDPGVAGEIDARKGVVVVGADRVGPTILRHWSHPATVLVAQPVCGQPAVLAFVNRALAGVLALSIEAGKITKIHVLVQPSTLDPLRAELGGG.

The sigma-70 factor domain-2 stretch occupies residues 11-74 (WRAHRAYLVD…LCLDHIKSAS (64 aa)). A Polymerase core binding motif is present at residues 34–37 (DMVQ). Residues 110 to 162 (LALLIMLERLGPAERVVFVLHEIFGLPYQQIATTIGSQASTCRQLAHRARRKI) are sigma-70 factor domain-4_2. Positions 137–156 (YQQIATTIGSQASTCRQLAH) form a DNA-binding region, H-T-H motif.

It belongs to the sigma-70 factor family. ECF subfamily. In terms of assembly, interacts transiently with the RNA polymerase catalytic core formed by RpoA, RpoB, RpoC and RpoZ (2 alpha, 1 beta, 1 beta' and 1 omega subunit) to form the RNA polymerase holoenzyme that can initiate transcription.

Its function is as follows. Sigma factors are initiation factors that promote the attachment of RNA polymerase to specific initiation sites and are then released. Extracytoplasmic function (ECF) sigma factors are held in an inactive form by a cognate anti-sigma factor until released, although no anti-sigma factor is known for this protein. This chain is Probable ECF RNA polymerase sigma factor SigI (sigI), found in Mycobacterium tuberculosis (strain CDC 1551 / Oshkosh).